We begin with the raw amino-acid sequence, 145 residues long: 3-hydroxyacyl-[acyl-carrier-protein] dehydratase FabZ (145 aa).

H51 is an active-site residue.

Belongs to the thioester dehydratase family. FabZ subfamily.

The protein resides in the cytoplasm. It carries out the reaction a (3R)-hydroxyacyl-[ACP] = a (2E)-enoyl-[ACP] + H2O. Its function is as follows. Involved in unsaturated fatty acids biosynthesis. Catalyzes the dehydration of short chain beta-hydroxyacyl-ACPs and long chain saturated and unsaturated beta-hydroxyacyl-ACPs. This Macrococcus caseolyticus (strain JCSC5402) (Macrococcoides caseolyticum) protein is 3-hydroxyacyl-[acyl-carrier-protein] dehydratase FabZ.